Here is a 268-residue protein sequence, read N- to C-terminus: Undecaprenyl-diphosphatase (268 aa).

7 consecutive transmembrane segments (helical) span residues 47-67, 83-103, 109-129, 144-164, 184-204, 218-238, and 246-266; these read FAIL…FFKL, FIIG…IAGK, LFDP…LLWV, YPLM…IPGV, AAEF…VYDF, LIAI…KAFL, and FVLF…ALAL.

Belongs to the UppP family.

It localises to the cell inner membrane. The catalysed reaction is di-trans,octa-cis-undecaprenyl diphosphate + H2O = di-trans,octa-cis-undecaprenyl phosphate + phosphate + H(+). In terms of biological role, catalyzes the dephosphorylation of undecaprenyl diphosphate (UPP). Confers resistance to bacitracin. The protein is Undecaprenyl-diphosphatase of Bradyrhizobium sp. (strain ORS 278).